A 253-amino-acid chain; its full sequence is 3-deoxy-manno-octulosonate cytidylyltransferase (253 aa).

Belongs to the KdsB family.

Its subcellular location is the cytoplasm. The catalysed reaction is 3-deoxy-alpha-D-manno-oct-2-ulosonate + CTP = CMP-3-deoxy-beta-D-manno-octulosonate + diphosphate. It functions in the pathway nucleotide-sugar biosynthesis; CMP-3-deoxy-D-manno-octulosonate biosynthesis; CMP-3-deoxy-D-manno-octulosonate from 3-deoxy-D-manno-octulosonate and CTP: step 1/1. The protein operates within bacterial outer membrane biogenesis; lipopolysaccharide biosynthesis. Its function is as follows. Activates KDO (a required 8-carbon sugar) for incorporation into bacterial lipopolysaccharide in Gram-negative bacteria. The protein is 3-deoxy-manno-octulosonate cytidylyltransferase of Neisseria meningitidis serogroup B (strain ATCC BAA-335 / MC58).